We begin with the raw amino-acid sequence, 203 residues long: Superoxide dismutase [Mn] (203 aa).

The Mn(2+) site is built by H27, H81, D164, and H168.

This sequence belongs to the iron/manganese superoxide dismutase family. Homodimer. Mn(2+) is required as a cofactor.

The catalysed reaction is 2 superoxide + 2 H(+) = H2O2 + O2. Functionally, destroys superoxide anion radicals which are normally produced within the cells and which are toxic to biological systems. Partially complements double sodA-sodB deletions in E.coli. This Pseudomonas aeruginosa (strain ATCC 15692 / DSM 22644 / CIP 104116 / JCM 14847 / LMG 12228 / 1C / PRS 101 / PAO1) protein is Superoxide dismutase [Mn].